A 254-amino-acid polypeptide reads, in one-letter code: HTH-type transcriptional regulator GolR (254 aa).

Residues 3–58 (PFERQNKIIHLLDQNNKITVPELSRILDVSISTIRNDLSALEESGMIKKVHGGAVL) form the HTH deoR-type domain. A DNA-binding region (H-T-H motif) is located at residues 20–39 (ITVPELSRILDVSISTIRND).

Involved in the glycerol metabolism. Repressor of the gol operon for glycerol metabolism. The protein is HTH-type transcriptional regulator GolR of Listeria innocua serovar 6a (strain ATCC BAA-680 / CLIP 11262).